Here is a 201-residue protein sequence, read N- to C-terminus: MARYTGPKSKIARKFGDPIFGADKVLSKKNYPPGQHGNNRRRKTSEYGLQLREKQKAKYTYGVLEKQFRHLFHRAQRAKGVTGELLIQFLEARLDNVVFRLGIAPTRSAARQLVSHRHITVDGSVVNIPSYSVKPGQVIGVRERSKSLEVIADALTGFNHSKYPWMEWDQSSLSGKLLHMPDRTDIPENIKEQLIVELYSK.

Residues 26 to 47 (LSKKNYPPGQHGNNRRRKTSEY) are disordered. An S4 RNA-binding domain is found at 92 to 154 (ARLDNVVFRL…SKSLEVIADA (63 aa)).

The protein belongs to the universal ribosomal protein uS4 family. Part of the 30S ribosomal subunit. Contacts protein S5. The interaction surface between S4 and S5 is involved in control of translational fidelity.

Its function is as follows. One of the primary rRNA binding proteins, it binds directly to 16S rRNA where it nucleates assembly of the body of the 30S subunit. Functionally, with S5 and S12 plays an important role in translational accuracy. The protein is Small ribosomal subunit protein uS4 of Porphyromonas gingivalis (strain ATCC 33277 / DSM 20709 / CIP 103683 / JCM 12257 / NCTC 11834 / 2561).